The chain runs to 413 residues: Putative glutamate synthase [NADPH] small chain (413 aa).

[4Fe-4S] cluster-binding residues include C33, C37, C43, and C47.

Aggregate of 4 catalytic active heterodimers, consisting of a large and a small subunit. It depends on [4Fe-4S] cluster as a cofactor.

The enzyme catalyses 2 L-glutamate + NADP(+) = L-glutamine + 2-oxoglutarate + NADPH + H(+). It functions in the pathway amino-acid biosynthesis; L-glutamate biosynthesis via GLT pathway; L-glutamate from 2-oxoglutarate and L-glutamine (NADP(+) route): step 1/1. The protein operates within energy metabolism; nitrogen metabolism. In Cereibacter sphaeroides (Rhodobacter sphaeroides), this protein is Putative glutamate synthase [NADPH] small chain (gltD).